Consider the following 95-residue polypeptide: UPF0235 protein Adeh_1087 (95 aa).

Belongs to the UPF0235 family.

In Anaeromyxobacter dehalogenans (strain 2CP-C), this protein is UPF0235 protein Adeh_1087.